The following is a 32-amino-acid chain: Trypsin inhibitor 4 (32 aa).

Intrachain disulfides connect C6–C23, C13–C25, and C19–C31.

This sequence belongs to the protease inhibitor I7 (squash-type serine protease inhibitor) family.

It is found in the secreted. Its function is as follows. Inhibits trypsin. The polypeptide is Trypsin inhibitor 4 (Cucurbita maxima (Pumpkin)).